Reading from the N-terminus, the 476-residue chain is Adenosylhomocysteinase (476 aa).

Positions 62, 141, and 201 each coordinate substrate. Residue 202–204 participates in NAD(+) binding; the sequence is TTT. Substrate-binding residues include lysine 231 and aspartate 235. NAD(+) contacts are provided by residues asparagine 236, 265–270, glutamate 288, asparagine 323, 344–346, and asparagine 389; these read GYGDVG and IGH.

This sequence belongs to the adenosylhomocysteinase family. It depends on NAD(+) as a cofactor.

The protein resides in the cytoplasm. The enzyme catalyses S-adenosyl-L-homocysteine + H2O = L-homocysteine + adenosine. It participates in amino-acid biosynthesis; L-homocysteine biosynthesis; L-homocysteine from S-adenosyl-L-homocysteine: step 1/1. Functionally, may play a key role in the regulation of the intracellular concentration of adenosylhomocysteine. This Myxococcus xanthus (strain DK1622) protein is Adenosylhomocysteinase.